The sequence spans 197 residues: UPF0215 protein MK0057 (197 aa).

This sequence belongs to the UPF0215 family.

The chain is UPF0215 protein MK0057 from Methanopyrus kandleri (strain AV19 / DSM 6324 / JCM 9639 / NBRC 100938).